The following is a 328-amino-acid chain: 4-hydroxythreonine-4-phosphate dehydrogenase (328 aa).

Residues H133 and T134 each contribute to the substrate site. Residues H163, H208, and H263 each coordinate a divalent metal cation. Substrate is bound by residues K271, N280, and R289.

The protein belongs to the PdxA family. In terms of assembly, homodimer. The cofactor is Zn(2+). Mg(2+) is required as a cofactor. Co(2+) serves as cofactor.

It is found in the cytoplasm. It catalyses the reaction 4-(phosphooxy)-L-threonine + NAD(+) = 3-amino-2-oxopropyl phosphate + CO2 + NADH. The protein operates within cofactor biosynthesis; pyridoxine 5'-phosphate biosynthesis; pyridoxine 5'-phosphate from D-erythrose 4-phosphate: step 4/5. Functionally, catalyzes the NAD(P)-dependent oxidation of 4-(phosphooxy)-L-threonine (HTP) into 2-amino-3-oxo-4-(phosphooxy)butyric acid which spontaneously decarboxylates to form 3-amino-2-oxopropyl phosphate (AHAP). This chain is 4-hydroxythreonine-4-phosphate dehydrogenase, found in Chromobacterium violaceum (strain ATCC 12472 / DSM 30191 / JCM 1249 / CCUG 213 / NBRC 12614 / NCIMB 9131 / NCTC 9757 / MK).